We begin with the raw amino-acid sequence, 296 residues long: MMIKQYLQVTKPGIIFGNLISVIGGFLLASKGDIDYPLFLSTLLGVSLVVASGCVFNNYIDRDIDKIMERTKNRVLVKGLIDPKVSLIYASVLGIAGMLLLYVAANALAMMLAVIGFVIYVGVYSLYMKRKSVYGTLIGSLSGAAPPVIGYCAVTGQFDTGALILLLIFSLWQMPHSYAIAIFRFKDYQAANIPVLPVIKGISVTKNHITLYILAFMVATLMLTLSGYAGYKYLVVAAAVSVWWLGMALRGYKATNDSVWARKLFVFSIIAITSLSVMMSVDFNVHSSAVLLTYAG.

The next 9 membrane-spanning stretches (helical) occupy residues 9 to 29, 36 to 56, 75 to 95, 99 to 119, 133 to 153, 163 to 183, 209 to 229, 234 to 254, and 265 to 285; these read VTKPGIIFGNLISVIGGFLLA, YPLFLSTLLGVSLVVASGCVF, VLVKGLIDPKVSLIYASVLGI, LLLYVAANALAMMLAVIGFVI, VYGTLIGSLSGAAPPVIGYCA, LILLLIFSLWQMPHSYAIAIF, ITLYILAFMVATLMLTLSGYA, LVVAAAVSVWWLGMALRGYKA, and FVFSIIAITSLSVMMSVDFNV.

The protein belongs to the UbiA prenyltransferase family. Protoheme IX farnesyltransferase subfamily.

It localises to the cell inner membrane. It carries out the reaction heme b + (2E,6E)-farnesyl diphosphate + H2O = Fe(II)-heme o + diphosphate. Its pathway is porphyrin-containing compound metabolism; heme O biosynthesis; heme O from protoheme: step 1/1. Its function is as follows. Converts heme B (protoheme IX) to heme O by substitution of the vinyl group on carbon 2 of heme B porphyrin ring with a hydroxyethyl farnesyl side group. The polypeptide is Protoheme IX farnesyltransferase (Yersinia pestis bv. Antiqua (strain Antiqua)).